A 706-amino-acid chain; its full sequence is Methionine--tRNA ligase (706 aa).

A 'HIGH' region motif is present at residues 13-23 (PYANGSIHLGH). Residues Cys144, Cys147, Cys157, and Cys160 each contribute to the Zn(2+) site. Residues 336–340 (KMSKS) carry the 'KMSKS' region motif. Lys339 serves as a coordination point for ATP. The segment at 570-593 (QQTMNTETESHSPQRHGQAQQHPV) is disordered. One can recognise a tRNA-binding domain in the interval 604 to 706 (DFVKIDLRIA…SGAQPGMRVK (103 aa)).

Belongs to the class-I aminoacyl-tRNA synthetase family. MetG type 1 subfamily. As to quaternary structure, homodimer. Zn(2+) is required as a cofactor.

It is found in the cytoplasm. The catalysed reaction is tRNA(Met) + L-methionine + ATP = L-methionyl-tRNA(Met) + AMP + diphosphate. Its function is as follows. Is required not only for elongation of protein synthesis but also for the initiation of all mRNA translation through initiator tRNA(fMet) aminoacylation. This chain is Methionine--tRNA ligase, found in Nitrosomonas europaea (strain ATCC 19718 / CIP 103999 / KCTC 2705 / NBRC 14298).